A 461-amino-acid polypeptide reads, in one-letter code: Chromosomal replication initiator protein DnaA (461 aa).

The tract at residues 1–83 (MDHSPWQRCL…LRFDVGSKPT (83 aa)) is domain I, interacts with DnaA modulators. Positions 83 to 124 (TIDNSVTNSPVSRNTGGNESLFAKATSAPKVAEPESNIPKKT) are domain II. The interval 125 to 341 (NVRLNYTFEN…GALNRVIANA (217 aa)) is domain III, AAA+ region. Residues G169, G171, K172, and T173 each coordinate ATP. Residues 342 to 461 (NFTGRAITID…YSNLIRTLSS (120 aa)) form a domain IV, binds dsDNA region.

This sequence belongs to the DnaA family. In terms of assembly, oligomerizes as a right-handed, spiral filament on DNA at oriC.

It is found in the cytoplasm. Plays an essential role in the initiation and regulation of chromosomal replication. ATP-DnaA binds to the origin of replication (oriC) to initiate formation of the DNA replication initiation complex once per cell cycle. Binds the DnaA box (a 9 base pair repeat at the origin) and separates the double-stranded (ds)DNA. Forms a right-handed helical filament on oriC DNA; dsDNA binds to the exterior of the filament while single-stranded (ss)DNA is stabiized in the filament's interior. The ATP-DnaA-oriC complex binds and stabilizes one strand of the AT-rich DNA unwinding element (DUE), permitting loading of DNA polymerase. After initiation quickly degrades to an ADP-DnaA complex that is not apt for DNA replication. Binds acidic phospholipids. In Colwellia psychrerythraea (strain 34H / ATCC BAA-681) (Vibrio psychroerythus), this protein is Chromosomal replication initiator protein DnaA.